A 614-amino-acid chain; its full sequence is Leucine-rich repeat and immunoglobulin-like domain-containing nogo receptor-interacting protein 1 (614 aa).

The signal sequence occupies residues M1 to G35. Disulfide bonds link C36–C42 and C40–C51. In terms of domain architecture, LRRNT spans C36–T65. At C36–T555 the chain is on the extracellular side. LRR repeat units follow at residues E66–S87, H90–N111, N114–G135, N138–D159, N162–G183, S186–H207, G210–R231, N258–H279, Y282–E303, R306–G327, and Y330–S351. An N-linked (GlcNAc...) asparagine glycan is attached at N138. N-linked (GlcNAc...) asparagine glycosylation is present at N196. N-linked (GlcNAc...) asparagine glycans are attached at residues N258, N268, and N287. N335 carries N-linked (GlcNAc...) asparagine glycosylation. The 55-residue stretch at N363–R417 folds into the LRRCT domain. 3 disulfides stabilise this stretch: C367–C390, C369–C415, and C440–C491. In terms of domain architecture, Ig-like C2-type spans P405–H507. N-linked (GlcNAc...) asparagine glycosylation is found at N486 and N536. A helical transmembrane segment spans residues T556–W576. The Cytoplasmic portion of the chain corresponds to S577–I614. Position 596 is a phosphoserine (S596).

As to quaternary structure, homotetramer. Forms a ternary complex with RTN4R/NGFR and RTN4R/TNFRSF19. Interacts with NGRF, RTN4R and MYT1L. In terms of processing, N-glycosylated. Contains predominantly high-mannose glycans.

It localises to the cell membrane. Functionally, functional component of the Nogo receptor signaling complex (RTN4R/NGFR) in RhoA activation responsible for some inhibition of axonal regeneration by myelin-associated factors. Is also an important negative regulator of oligodentrocyte differentiation and axonal myelination. Acts in conjunction with RTN4 and RTN4R in regulating neuronal precursor cell motility during cortical development. In Macaca fascicularis (Crab-eating macaque), this protein is Leucine-rich repeat and immunoglobulin-like domain-containing nogo receptor-interacting protein 1 (LINGO1).